The primary structure comprises 297 residues: Palmitoyl-protein thioesterase ABHD10, mitochondrial (297 aa).

The N-terminal 43 residues, 1 to 43 (MAAWAPCRRWGWAAVSFGRHPGLSASLARKPPRAWWLSACRQK), are a transit peptide targeting the mitochondrion. One can recognise an AB hydrolase-1 domain in the interval 69–196 (IIFIPGYLSN…EIEMKGEWTL (128 aa)). Residues S143, D240, and H270 each act as charge relay system in the active site.

This sequence belongs to the AB hydrolase superfamily.

It is found in the mitochondrion. The enzyme catalyses S-hexadecanoyl-L-cysteinyl-[protein] + H2O = L-cysteinyl-[protein] + hexadecanoate + H(+). It catalyses the reaction mycophenolic acid O-acyl-beta-D-glucuronide + H2O = mycophenolate + D-glucuronate + H(+). Its activity is regulated as follows. Inhibited by palmostatin-B. Acts as an acyl-protein thioesterase that hydrolyzes fatty acids from acylated residues in proteins. Regulates the mitochondrial S-depalmitoylation of the nucleophilic active site residue of peroxiredoxin-5/PRDX5, a key antioxidant protein, therefore modulating mitochondrial antioxidant ability. Also catalyzes the deglucuronidation of mycophenolic acid acyl-glucuronide, an active metabolite of the immunosuppressant drug mycophenolate. This chain is Palmitoyl-protein thioesterase ABHD10, mitochondrial, found in Mus musculus (Mouse).